A 103-amino-acid polypeptide reads, in one-letter code: uncharacterized protein (103 aa).

This is an uncharacterized protein from Archaeoglobus fulgidus (strain ATCC 49558 / DSM 4304 / JCM 9628 / NBRC 100126 / VC-16).